The chain runs to 83 residues: Evasin P1090 (83 aa).

The first 24 residues, 1 to 24 (MEVKIFAFLQIAVLIAFSLHLASA), serve as a signal peptide directing secretion. 3 disulfide bridges follow: C44–C63, C48–C65, and C59–C76. N-linked (GlcNAc...) asparagine glycosylation occurs at N47. Residue N70 is glycosylated (N-linked (GlcNAc...) asparagine).

The protein localises to the secreted. Salivary chemokine-binding protein which binds to host chemokines CXCL1, CXCL2, CXCL3, CXCL5, CXCL6, CXCL10, CXCL11 and CXCL13. The chain is Evasin P1090 from Ixodes ricinus (Common tick).